Reading from the N-terminus, the 55-residue chain is Large ribosomal subunit protein bL33 (55 aa).

This sequence belongs to the bacterial ribosomal protein bL33 family.

The sequence is that of Large ribosomal subunit protein bL33 from Dinoroseobacter shibae (strain DSM 16493 / NCIMB 14021 / DFL 12).